Reading from the N-terminus, the 239-residue chain is Large ribosomal subunit protein uL2 (239 aa).

It belongs to the universal ribosomal protein uL2 family.

It localises to the cytoplasm. This is Large ribosomal subunit protein uL2 (RPL8) from Encephalitozoon cuniculi (strain GB-M1) (Microsporidian parasite).